Reading from the N-terminus, the 74-residue chain is Imcroporin (74 aa).

An N-terminal signal peptide occupies residues 1–22 (MKFQYLLAVFLIVLVVTDHCQA). Residue lysine 39 is modified to Lysine amide; partial. The propeptide occupies 45–74 (QLEARFEPKQRNFRKRELDFEKLFANMPDY).

This sequence belongs to the non-disulfide-bridged peptide (NDBP) superfamily. Short antimicrobial peptide (group 4) family. Expressed by the venom gland.

Its subcellular location is the secreted. The protein resides in the target cell membrane. Its function is as follows. Has potent antibacterial activity against Gram-positive bacteria M.luteus, B.thuringiensis, S.aureus and B.subtilis, but not Gram-negative bacteria. Shows a weak cytotoxicity effect against mammalian cell lines and relatively low hemolytic activity against human erythrocytes. The sequence is that of Imcroporin from Isometrus maculatus (Lesser brown scorpion).